Here is a 1620-residue protein sequence, read N- to C-terminus: ABC-type organic anion transporter ABCA8A (1620 aa).

A run of 7 helical transmembrane segments spans residues 30 to 50 (TFLE…FLQL), 224 to 244 (CFLF…SAGV), 263 to 283 (SAFW…VTLL), 294 to 314 (VFLT…LSLI), 328 to 348 (FLTD…GFTA), 357 to 377 (LEWL…VQLL), and 397 to 417 (IGTI…TFYF). Asparagine 454 and asparagine 482 each carry an N-linked (GlcNAc...) asparagine glycan. One can recognise an ABC transporter 1 domain in the interval 478–713 (IRIRNLTKDY…WGIGYHLSLQ (236 aa)). Position 514 to 521 (514 to 521 (GHSGAGKS)) interacts with ATP. A helical membrane pass occupies residues 861 to 881 (IVILILVLGIGLLHILSANIY). A glycan (N-linked (GlcNAc...) asparagine) is linked at asparagine 967. The next 7 membrane-spanning stretches (helical) occupy residues 979 to 999 (CFPV…APSA), 1019 to 1039 (YLAY…YISM), 1068 to 1088 (ALFE…AFYA), 1105 to 1125 (ILYV…ISFI), 1133 to 1153 (SGLW…FMLI), 1159 to 1179 (ISLF…CTLL), and 1196 to 1216 (EYSY…VVIL). The ABC transporter 2 domain maps to 1284-1517 (LRKEYKGKKK…FGKEYLLEMK (234 aa)). 1322 to 1329 (GHNGAGKS) lines the ATP pocket.

It belongs to the ABC transporter superfamily. ABCA family. In terms of tissue distribution, expressed in lung, heart, liver, skeletal muscle and testis. Highly expressed in the liver, and is also abundant in heart and skeletal muscle. Highly expressed in heart.

The protein resides in the cell membrane. It is found in the basolateral cell membrane. It catalyses the reaction taurocholate(in) + ATP + H2O = taurocholate(out) + ADP + phosphate + H(+). The enzyme catalyses cholesterol(in) + ATP + H2O = cholesterol(out) + ADP + phosphate + H(+). Cholesterol efflux is increased by extracellularly applied taurocholate. Mediates cholesterol and taurocholate efflux. Through the interaction with ABCA1 potentiates the cholesterol efflux to lipid-free APOA1, in turn regulates high-density lipoprotein cholesterol levels. This Mus musculus (Mouse) protein is ABC-type organic anion transporter ABCA8A.